Here is a 156-residue protein sequence, read N- to C-terminus: Arginine repressor (156 aa).

Belongs to the ArgR family.

It localises to the cytoplasm. The protein operates within amino-acid biosynthesis; L-arginine biosynthesis [regulation]. In terms of biological role, regulates arginine biosynthesis genes. In Shewanella putrefaciens (strain CN-32 / ATCC BAA-453), this protein is Arginine repressor.